The following is a 254-amino-acid chain: Undecaprenyl-diphosphatase (254 aa).

8 helical membrane passes run 1-21, 41-61, 75-95, 96-116, 130-150, 174-194, 210-230, and 234-254; these read MGIIESIILGIVEGLTEFLPV, AHKAFEVAIQSGAILAVVFLY, LIIAFIPTGILGFLLYKIIKG, LFSPYIVSIMLIVGGLVFIAV, ILKIPYYKAFFIGVFQSIAMI, AEFSFLLAVPTMFAATSYDIM, TGFVTAFVFAVLAIKLFIGFV, and NFVPFGIYRIILGFIFLLFVL.

This sequence belongs to the UppP family.

Its subcellular location is the cell inner membrane. It catalyses the reaction di-trans,octa-cis-undecaprenyl diphosphate + H2O = di-trans,octa-cis-undecaprenyl phosphate + phosphate + H(+). In terms of biological role, catalyzes the dephosphorylation of undecaprenyl diphosphate (UPP). Confers resistance to bacitracin. In Persephonella marina (strain DSM 14350 / EX-H1), this protein is Undecaprenyl-diphosphatase.